Reading from the N-terminus, the 277-residue chain is Undecaprenyl-diphosphatase (277 aa).

A run of 7 helical transmembrane segments spans residues 3–23 (YIIE…TEIF), 48–68 (LTLF…IYYF), 97–117 (ISYA…GLLI), 125–145 (LLSI…VFLL), 198–218 (SFLC…YDAI), 227–247 (IPGF…TIKI), and 257–277 (LIWF…LYII).

It belongs to the UppP family.

The protein localises to the cell membrane. The enzyme catalyses di-trans,octa-cis-undecaprenyl diphosphate + H2O = di-trans,octa-cis-undecaprenyl phosphate + phosphate + H(+). Functionally, catalyzes the dephosphorylation of undecaprenyl diphosphate (UPP). Confers resistance to bacitracin. This Acholeplasma laidlawii (strain PG-8A) protein is Undecaprenyl-diphosphatase.